The chain runs to 184 residues: MGFLKILRKQRAREREMRILILGLDNAGKTTLMKKFLDEPTDTIEPTLGFDIKTVHFKDFQLNLWDVGGQKSLRSYWKNYFESTDALIWVVDSSDRERLTQCSEELKKLLQEERLSGASLLVLANKSDLPGAIDVNSIAQVLELQSIKTHHWKIFSCCALSGERLVQAMTWLCDDVGSRIFILD.

The N-myristoyl glycine moiety is linked to residue Gly-2. GTP contacts are provided by residues 23-30, 66-70, Gly-68, and 125-128; these read GLDNAGKT, DVGGQ, and NKSD.

The protein belongs to the small GTPase superfamily. Arf family.

It is found in the cytoplasm. Its subcellular location is the cell membrane. It localises to the cytoskeleton. The protein resides in the microtubule organizing center. The protein localises to the centrosome. Its function is as follows. GTP-binding protein that functions in embryogenesis, cytokinesis, germline development and microtubulule cytoskeleton dynamics. This is ADP-ribosylation factor-like protein 2 (evl-20.1) from Caenorhabditis briggsae.